We begin with the raw amino-acid sequence, 213 residues long: DNA-directed RNA polymerase subunit alpha (213 aa).

This sequence belongs to the RNA polymerase alpha chain family. In terms of assembly, in plastids the minimal PEP RNA polymerase catalytic core is composed of four subunits: alpha, beta, beta', and beta''. When a (nuclear-encoded) sigma factor is associated with the core the holoenzyme is formed, which can initiate transcription.

Its subcellular location is the plastid. It is found in the chloroplast. It carries out the reaction RNA(n) + a ribonucleoside 5'-triphosphate = RNA(n+1) + diphosphate. Functionally, DNA-dependent RNA polymerase catalyzes the transcription of DNA into RNA using the four ribonucleoside triphosphates as substrates. This chain is DNA-directed RNA polymerase subunit alpha (rpoA), found in Euglena stellata.